A 207-amino-acid chain; its full sequence is Ribosomal RNA large subunit methyltransferase E (207 aa).

5 residues coordinate S-adenosyl-L-methionine: Gly60, Trp62, Asp80, Asp96, and Asp121. Lys161 (proton acceptor) is an active-site residue.

This sequence belongs to the class I-like SAM-binding methyltransferase superfamily. RNA methyltransferase RlmE family.

It localises to the cytoplasm. The catalysed reaction is uridine(2552) in 23S rRNA + S-adenosyl-L-methionine = 2'-O-methyluridine(2552) in 23S rRNA + S-adenosyl-L-homocysteine + H(+). Specifically methylates the uridine in position 2552 of 23S rRNA at the 2'-O position of the ribose in the fully assembled 50S ribosomal subunit. The chain is Ribosomal RNA large subunit methyltransferase E from Methylobacillus flagellatus (strain ATCC 51484 / DSM 6875 / VKM B-1610 / KT).